A 523-amino-acid chain; its full sequence is Mitochondrial distribution and morphology protein 12 (523 aa).

An SMP-LTD domain is found at 1-483 (MSFDINWEKL…WPSWICVDMA (483 aa)). The span at 108-117 (HEADIINDHD) shows a compositional bias: basic and acidic residues. Disordered stretches follow at residues 108–160 (HEAD…QYDE), 178–213 (SASTPKRTSPQRPPLISPRGEVTQQTLSKPKEPFQS), 270–313 (KTKE…NAKN), and 483–523 (AEND…KKED). Composition is skewed to acidic residues over residues 118–140 (YGDEDDIDDDYDNDSDDYDDDEN) and 148–158 (EDEENEESSQY). Polar residues-rich tracts occupy residues 178–187 (SASTPKRTSP) and 277–288 (SGDQQQGKQTGK). Over residues 289 to 313 (ANEKGQKHKHEHEEEQGSDKQNAKN) the composition is skewed to basic and acidic residues. A compositionally biased stretch (acidic residues) spans 483-501 (AENDDEEEDDDDDDHDEDN). Basic and acidic residues predominate over residues 502-523 (EGRGRMRDTGDVDVRDHDKKED).

The protein belongs to the MDM12 family. Component of the ER-mitochondria encounter structure (ERMES) or MDM complex, composed of MMM1, MDM10, MDM12 and MDM34. An MMM1 homodimer associates with one molecule of MDM12 on each side in a pairwise head-to-tail manner, and the SMP-LTD domains of MMM1 and MDM12 generate a continuous hydrophobic tunnel for phospholipid trafficking.

It localises to the mitochondrion outer membrane. The protein resides in the endoplasmic reticulum membrane. In terms of biological role, component of the ERMES/MDM complex, which serves as a molecular tether to connect the endoplasmic reticulum (ER) and mitochondria. Components of this complex are involved in the control of mitochondrial shape and protein biogenesis, and function in nonvesicular lipid trafficking between the ER and mitochondria. MDM12 is required for the interaction of the ER-resident membrane protein MMM1 and the outer mitochondrial membrane-resident beta-barrel protein MDM10. The MDM12-MMM1 subcomplex functions in the major beta-barrel assembly pathway that is responsible for biogenesis of all mitochondrial outer membrane beta-barrel proteins, and acts in a late step after the SAM complex. The MDM10-MDM12-MMM1 subcomplex further acts in the TOM40-specific pathway after the action of the MDM12-MMM1 complex. Essential for establishing and maintaining the structure of mitochondria and maintenance of mtDNA nucleoids. This Lodderomyces elongisporus (strain ATCC 11503 / CBS 2605 / JCM 1781 / NBRC 1676 / NRRL YB-4239) (Yeast) protein is Mitochondrial distribution and morphology protein 12.